A 677-amino-acid chain; its full sequence is MSKYYLKAPYQPKGDQPKAITKLVDGVNSGREYQTLLGATGTGKTFTIANVIAKTGRPALVLAHNKTLAAQLCNELREFFPNNAVEYFISYYDYYQPEAYVPVSDTYIAKTSSINEEIDMLRHSATRSLFERDDVIVVASISCIYGLGIPSEYLKASVKFKVGNEINLRKSLRELVANQYFRNDFDIGRGKFRVKGDVLEIGPAYDDRLVRIELFGDEIEAIRYVDPITGEILDSLNCISIYPAKHFVTPKERLVTAIDDIQKELKEQLDFFNKEGKLLEAQRLEQRTKYDLEMLREVGYCNGVENYARHLSGREAGSPPECLIDYFPKDWLLVIDESHVTCSQLLAMYNGDQSRKKVLIEHGFRLPSAADNRPLKSQEFWNKANQTVFISATPGNWELEISSGAIIEQVIRPTGVLDPLVEVRPTKGQVEDLLDEIRERSRKKQRVLITTLTKRMAEDLTDYLSENDVRVRYLHSEIHSIERIEIIQDLRMGEYDVLVGVNLLREGLDLPEVSLVVILDADKEGFLRAERSLIQTIGRAARHIEGKALLYADNFTDSMKKAIEETERRRAIQESYNQQNNIVPMPAGKKANNSILSFLELSRRVQKDGIDNDLVEIAGNVVDEFKFNNNSELAIENLPQLIDELETKMKKSAKDLDFENAAKLRDKIHQLRKKLIR.

The Helicase ATP-binding domain occupies 25-412 (DGVNSGREYQ…SGAIIEQVIR (388 aa)). ATP is bound at residue 38–45 (GATGTGKT). Residues 91–114 (YYDYYQPEAYVPVSDTYIAKTSSI) carry the Beta-hairpin motif. The Helicase C-terminal domain occupies 429–591 (QVEDLLDEIR…IVPMPAGKKA (163 aa)). The UVR domain occupies 639-674 (PQLIDELETKMKKSAKDLDFENAAKLRDKIHQLRKK).

It belongs to the UvrB family. Forms a heterotetramer with UvrA during the search for lesions. Interacts with UvrC in an incision complex.

Its subcellular location is the cytoplasm. In terms of biological role, the UvrABC repair system catalyzes the recognition and processing of DNA lesions. A damage recognition complex composed of 2 UvrA and 2 UvrB subunits scans DNA for abnormalities. Upon binding of the UvrA(2)B(2) complex to a putative damaged site, the DNA wraps around one UvrB monomer. DNA wrap is dependent on ATP binding by UvrB and probably causes local melting of the DNA helix, facilitating insertion of UvrB beta-hairpin between the DNA strands. Then UvrB probes one DNA strand for the presence of a lesion. If a lesion is found the UvrA subunits dissociate and the UvrB-DNA preincision complex is formed. This complex is subsequently bound by UvrC and the second UvrB is released. If no lesion is found, the DNA wraps around the other UvrB subunit that will check the other stand for damage. This chain is UvrABC system protein B, found in Prochlorococcus marinus (strain SARG / CCMP1375 / SS120).